The sequence spans 255 residues: Ly6/PLAUR domain-containing protein 8 (255 aa).

Residues 1-20 (MRGVFIAGVIAAFAITVVDS) form the signal peptide. N-linked (GlcNAc...) asparagine glycans are attached at residues Asn-22, Asn-30, Asn-53, Asn-72, Asn-76, Asn-105, Asn-115, Asn-128, Asn-154, Asn-169, Asn-179, Asn-200, and Asn-210. The 50-residue stretch at 121 to 170 (CMSCYGHNKTLCEEKPQKCYEGEQCVFIIAEMVNGSGRVELKGCSDISNS) folds into the UPAR/Ly6 domain. Residue Ser-233 is the site of GPI-anchor amidated serine attachment. A propeptide spans 234–255 (MGTKASFTSSIFGSLLLLKLLF) (removed in mature form).

The protein belongs to the CNF-like-inhibitor family. Highly N-glycosylated. Not O-glycosylated. In terms of processing, GPI-anchored. The GPI-anchor is cleaved, leading to secretion into the colonic lumen. In terms of tissue distribution, specifically present in enterocytes located at the uppermost epithelial layer of the colon (at protein level). Exclusively expressed in the large intestine: specifically expressed on the apical surface of epithelial cells located at the uppermost layer of the colonic gland.

The protein resides in the cell membrane. The protein localises to the secreted. Its function is as follows. Secreted protein specifically required to prevent invasion of Gram-negative bacteria in the inner mucus layer of the colon epithelium, a portion of the large intestine which is free of commensal microbiota. Prevents invasion of flagellated microbiota by binding to the flagellum of bacteria, such as P.mirabilis, thereby inhibiting bacterial motility in the intestinal lumen. Segregation of intestinal bacteria and epithelial cells in the colon is required to preserve intestinal homeostasis. In Mus musculus (Mouse), this protein is Ly6/PLAUR domain-containing protein 8.